The chain runs to 160 residues: Protein cornichon homolog 3 (160 aa).

Residues 1 to 10 (MAFTFAAFCY) are Cytoplasmic-facing. A helical membrane pass occupies residues 11 to 31 (MLSLVLCAALIFFAIWHIIAF). Topologically, residues 32 to 72 (DELRTDFKSPIDQCNPVHARERLRNIERICFLLRKLVLPEY) are lumenal. The helical transmembrane segment at 73–93 (SIHSLFCIMFLCAQEWLTLGL) threads the bilayer. At 94–138 (NVPLLFYHFWRYFHCPADSSELAYDPPVVMNADTLSYCQKEAWCK) the chain is on the cytoplasmic side. The helical transmembrane segment at 139–159 (LAFYLLSFFYYLYCMIYTLVS) threads the bilayer. Ser160 is a topological domain (lumenal).

This sequence belongs to the cornichon family. In terms of assembly, acts as an auxiliary subunit for AMPA-selective glutamate receptors (AMPARs). Found in a complex with GRIA1, GRIA2, GRIA3, GRIA4, CNIH2, CACNG2, CACNG3, CACNG4, CACNG5, CACNG7 and CACNG8. In terms of tissue distribution, expression is up-regulated in dorsolateral prefrontal cortex of patients with schizophrenia (postmortem brain study).

It is found in the postsynaptic cell membrane. In terms of biological role, regulates the trafficking and gating properties of AMPA-selective glutamate receptors (AMPARs). Promotes their targeting to the cell membrane and synapses and modulates their gating properties by regulating their rates of activation, deactivation and desensitization. In Homo sapiens (Human), this protein is Protein cornichon homolog 3 (CNIH3).